The primary structure comprises 223 residues: Phosphoribosylformylglycinamidine synthase subunit PurQ (223 aa).

Residues 3–223 enclose the Glutamine amidotransferase type-1 domain; that stretch reads SAVILLPGLN…LFAGALGITA (221 aa). The active-site Nucleophile is the Cys-87. Residues His-197 and Glu-199 contribute to the active site.

In terms of assembly, part of the FGAM synthase complex composed of 1 PurL, 1 PurQ and 2 PurS subunits.

The protein resides in the cytoplasm. It catalyses the reaction N(2)-formyl-N(1)-(5-phospho-beta-D-ribosyl)glycinamide + L-glutamine + ATP + H2O = 2-formamido-N(1)-(5-O-phospho-beta-D-ribosyl)acetamidine + L-glutamate + ADP + phosphate + H(+). The enzyme catalyses L-glutamine + H2O = L-glutamate + NH4(+). It participates in purine metabolism; IMP biosynthesis via de novo pathway; 5-amino-1-(5-phospho-D-ribosyl)imidazole from N(2)-formyl-N(1)-(5-phospho-D-ribosyl)glycinamide: step 1/2. In terms of biological role, part of the phosphoribosylformylglycinamidine synthase complex involved in the purines biosynthetic pathway. Catalyzes the ATP-dependent conversion of formylglycinamide ribonucleotide (FGAR) and glutamine to yield formylglycinamidine ribonucleotide (FGAM) and glutamate. The FGAM synthase complex is composed of three subunits. PurQ produces an ammonia molecule by converting glutamine to glutamate. PurL transfers the ammonia molecule to FGAR to form FGAM in an ATP-dependent manner. PurS interacts with PurQ and PurL and is thought to assist in the transfer of the ammonia molecule from PurQ to PurL. The polypeptide is Phosphoribosylformylglycinamidine synthase subunit PurQ (Brucella suis biovar 1 (strain 1330)).